The sequence spans 22 residues: SGGGKEAAETFNRVESHPRPDA.

The disordered stretch occupies residues 1 to 22 (SGGGKEAAETFNRVESHPRPDA).

Its function is as follows. Inhibits insect alpha-amylases. The polypeptide is Alpha-amylase inhibitor DR4 (Delonix regia (Royal poinciana)).